Here is a 274-residue protein sequence, read N- to C-terminus: Thiamine kinase (274 aa).

This sequence belongs to the thiamine kinase family.

It catalyses the reaction thiamine + ATP = thiamine phosphate + ADP + H(+). It participates in cofactor biosynthesis; thiamine diphosphate biosynthesis; thiamine phosphate from thiamine: step 1/1. Functionally, catalyzes the ATP-dependent phosphorylation of thiamine to thiamine phosphate. Is involved in thiamine salvage. This is Thiamine kinase from Shigella flexneri serotype 5b (strain 8401).